The primary structure comprises 185 residues: Ribosome-recycling factor (185 aa).

It belongs to the RRF family.

Its subcellular location is the cytoplasm. Its function is as follows. Responsible for the release of ribosomes from messenger RNA at the termination of protein biosynthesis. May increase the efficiency of translation by recycling ribosomes from one round of translation to another. The protein is Ribosome-recycling factor of Shouchella clausii (strain KSM-K16) (Alkalihalobacillus clausii).